The following is a 172-amino-acid chain: Large ribosomal subunit protein uL10 (172 aa).

This sequence belongs to the universal ribosomal protein uL10 family. Part of the ribosomal stalk of the 50S ribosomal subunit. The N-terminus interacts with L11 and the large rRNA to form the base of the stalk. The C-terminus forms an elongated spine to which L12 dimers bind in a sequential fashion forming a multimeric L10(L12)X complex.

In terms of biological role, forms part of the ribosomal stalk, playing a central role in the interaction of the ribosome with GTP-bound translation factors. The chain is Large ribosomal subunit protein uL10 from Chlorobium phaeovibrioides (strain DSM 265 / 1930) (Prosthecochloris vibrioformis (strain DSM 265)).